Consider the following 251-residue polypeptide: Triosephosphate isomerase (251 aa).

Residue 9–11 (NWK) participates in substrate binding. Residue His-95 is the Electrophile of the active site. Residue Glu-167 is the Proton acceptor of the active site. Substrate contacts are provided by residues Gly-173, Ser-213, and 234 to 235 (GG).

The protein belongs to the triosephosphate isomerase family. In terms of assembly, homodimer.

It localises to the cytoplasm. It catalyses the reaction D-glyceraldehyde 3-phosphate = dihydroxyacetone phosphate. The protein operates within carbohydrate biosynthesis; gluconeogenesis. It functions in the pathway carbohydrate degradation; glycolysis; D-glyceraldehyde 3-phosphate from glycerone phosphate: step 1/1. In terms of biological role, involved in the gluconeogenesis. Catalyzes stereospecifically the conversion of dihydroxyacetone phosphate (DHAP) to D-glyceraldehyde-3-phosphate (G3P). The polypeptide is Triosephosphate isomerase (Citrifermentans bemidjiense (strain ATCC BAA-1014 / DSM 16622 / JCM 12645 / Bem) (Geobacter bemidjiensis)).